The chain runs to 205 residues: Imidazole glycerol phosphate synthase subunit HisH (205 aa).

A Glutamine amidotransferase type-1 domain is found at 1-205 (MITIVDYQMG…RFATAPVEVA (205 aa)). C79 (nucleophile) is an active-site residue. Catalysis depends on residues H182 and E184.

As to quaternary structure, heterodimer of HisH and HisF.

The protein resides in the cytoplasm. It carries out the reaction 5-[(5-phospho-1-deoxy-D-ribulos-1-ylimino)methylamino]-1-(5-phospho-beta-D-ribosyl)imidazole-4-carboxamide + L-glutamine = D-erythro-1-(imidazol-4-yl)glycerol 3-phosphate + 5-amino-1-(5-phospho-beta-D-ribosyl)imidazole-4-carboxamide + L-glutamate + H(+). The catalysed reaction is L-glutamine + H2O = L-glutamate + NH4(+). It participates in amino-acid biosynthesis; L-histidine biosynthesis; L-histidine from 5-phospho-alpha-D-ribose 1-diphosphate: step 5/9. IGPS catalyzes the conversion of PRFAR and glutamine to IGP, AICAR and glutamate. The HisH subunit catalyzes the hydrolysis of glutamine to glutamate and ammonia as part of the synthesis of IGP and AICAR. The resulting ammonia molecule is channeled to the active site of HisF. The polypeptide is Imidazole glycerol phosphate synthase subunit HisH (Rhodopirellula baltica (strain DSM 10527 / NCIMB 13988 / SH1)).